A 234-amino-acid chain; its full sequence is Large ribosomal subunit protein uL1c (234 aa).

It belongs to the universal ribosomal protein uL1 family. Part of the 50S ribosomal subunit.

The protein localises to the plastid. It is found in the chloroplast. Its function is as follows. Binds directly to 23S rRNA. Might be involved in E site tRNA release (Potential). This Guillardia theta (Cryptophyte) protein is Large ribosomal subunit protein uL1c (rpl1).